We begin with the raw amino-acid sequence, 515 residues long: Putative ribose/galactose/methyl galactoside import ATP-binding protein (515 aa).

ABC transporter domains follow at residues 26 to 262 (LEVA…VGRE) and 272 to 511 (VALG…KIMD). 58 to 65 (GENGAGKS) serves as a coordination point for ATP.

Belongs to the ABC transporter superfamily. Carbohydrate importer 2 (CUT2) (TC 3.A.1.2) family.

The protein localises to the cell inner membrane. The catalysed reaction is D-ribose(out) + ATP + H2O = D-ribose(in) + ADP + phosphate + H(+). The enzyme catalyses D-galactose(out) + ATP + H2O = D-galactose(in) + ADP + phosphate + H(+). Part of an ABC transporter complex involved in carbohydrate import. Could be involved in ribose, galactose and/or methyl galactoside import. Responsible for energy coupling to the transport system. This is Putative ribose/galactose/methyl galactoside import ATP-binding protein from Hahella chejuensis (strain KCTC 2396).